The primary structure comprises 325 residues: MLLAPGDVIKRSSEELKQRQIQINLVDWTESEGGKEDKTEPKEESKAEGSKDGEGTQSESGQKEEGGKETKDADVDRRIHTAVGSGSSTKGPGERANENADRGDGKVGGGGGDADAGVGATGTNGRRWVVLTEEIARAIESKYGTKIDVYRDEVPAQIIEVERSLQKELGISREGVAEQTERLRDLRRKEKNGTHAKAVERGGRKQRKESHGDAQREGVEEEKTSEEPARIGITIEGVMSQKKLLSMIGGVERKMAPIGARESAVMLVSNSIKDVMRATAYFTAPTGDPHWKEVAREASKKKNILAYTSTGGDAKTEFLRLFDHL.

2 disordered regions span residues 1–126 (MLLA…TNGR) and 175–231 (GVAE…PARI). 4 stretches are compositionally biased toward basic and acidic residues: residues 8-18 (VIKRSSEELKQ), 32-54 (EGGK…KDGE), 61-79 (GQKE…DRRI), and 92-105 (PGER…RGDG). Lys-106 is a binding site for ATP. Gly residues predominate over residues 106-122 (KVGGGGGDADAGVGATG). Residues 175–229 (GVAEQTERLRDLRRKEKNGTHAKAVERGGRKQRKESHGDAQREGVEEEKTSEEPA) are compositionally biased toward basic and acidic residues.

Belongs to the orbivirus VP6 family. Homohexamer.

It localises to the virion. The catalysed reaction is ATP + H2O = ADP + phosphate + H(+). ATP dependent RNA helicase essential for RNA packaging and viral transcription. Possesses ss- and dsRNA-binding capacity. In Bluetongue virus 11 (isolate USA) (BTV 11), this protein is Helicase VP6-A (Segment-9).